The chain runs to 351 residues: D-alanine--D-alanine ligase (351 aa).

Residues 141 to 349 (KAAFSAAGLP…ISQLVARLIE (209 aa)) form the ATP-grasp domain. Position 176 to 231 (176 to 231 (ETQLGYPCFIKPANLGSSVGISKAYDKKELLNGLDLAAQLDSRIVVEKNIKARELE)) interacts with ATP. 3 residues coordinate Mg(2+): aspartate 302, glutamate 316, and asparagine 318.

The protein belongs to the D-alanine--D-alanine ligase family. Mg(2+) is required as a cofactor. It depends on Mn(2+) as a cofactor.

It is found in the cytoplasm. It carries out the reaction 2 D-alanine + ATP = D-alanyl-D-alanine + ADP + phosphate + H(+). It functions in the pathway cell wall biogenesis; peptidoglycan biosynthesis. Its function is as follows. Cell wall formation. This chain is D-alanine--D-alanine ligase, found in Prochlorococcus marinus (strain SARG / CCMP1375 / SS120).